A 429-amino-acid chain; its full sequence is Glutamyl-tRNA reductase (429 aa).

Substrate contacts are provided by residues 50-53 (TCNR), S116, 121-123 (EPQ), and Q127. The active-site Nucleophile is C51. 196-201 (GAGEMA) is a binding site for NADP(+).

This sequence belongs to the glutamyl-tRNA reductase family. In terms of assembly, homodimer.

It catalyses the reaction (S)-4-amino-5-oxopentanoate + tRNA(Glu) + NADP(+) = L-glutamyl-tRNA(Glu) + NADPH + H(+). Its pathway is porphyrin-containing compound metabolism; protoporphyrin-IX biosynthesis; 5-aminolevulinate from L-glutamyl-tRNA(Glu): step 1/2. Its function is as follows. Catalyzes the NADPH-dependent reduction of glutamyl-tRNA(Glu) to glutamate 1-semialdehyde (GSA). In Thermodesulfovibrio yellowstonii (strain ATCC 51303 / DSM 11347 / YP87), this protein is Glutamyl-tRNA reductase.